The following is a 521-amino-acid chain: Zinc finger protein GLIS2 (521 aa).

Residues 35 to 174 form an interaction with CTNND1 region; that stretch reads ALHRELGLVD…AKQLVCRWAK (140 aa). Disordered stretches follow at residues 41 to 63 and 84 to 110; these read GLVDDSPAPGSPGSPPPGFLLNP and SPPSGLDSPNGSSSLSPECQGNGDLPP. Residues 49–58 are compositionally biased toward pro residues; the sequence is PGSPGSPPPG. A transcription activation region spans residues 71 to 137; sequence GRFSAAPLVD…SSFQFFLPLG (67 aa). Over residues 84–100 the composition is skewed to low complexity; sequence SPPSGLDSPNGSSSLSP. Residues 148-171 are transcription repression; sequence SFLPPPKDKCLSPELPLAKQLVCR. Residues 168-193 form a C2H2-type 1 zinc finger; it reads LVCRWAKCNQLFELLQDLVDHVNDHH. Residues 202-229 form a C2H2-type 2; atypical zinc finger; the sequence is YCCHWEGCARHGRGFNARYKMLIHIRTH. 3 consecutive C2H2-type zinc fingers follow at residues 235–257, 263–287, and 293–317; these read HRCPTCNKSFSRLENLKIHNRSH, YVCPYEGCNKRYSNSSDRFKHTRTH, and YYCKMPGCHKRYTDPSSLRKHIKAH. The segment at 436–501 is disordered; the sequence is AGSKAEGEKG…NSAASSPEVL (66 aa). Basic and acidic residues predominate over residues 455 to 470; sequence GLEDHKTPLERTERSR. A compositionally biased stretch (polar residues) spans 487-496; sequence DLSTGNSAAS.

Belongs to the GLI C2H2-type zinc-finger protein family. Interacts with CTBP1 and HDAC3. Interacts with CTNNB1 and CTNND1. Interacts with SUFU. In terms of processing, C-terminus cleavage is induced by interaction with CTNND1 and enhances by Src tyrosine kinase. Expressed at high levels in kidney, and at lower levels in heart and lung.

It localises to the nucleus speckle. The protein resides in the cytoplasm. Functionally, can act either as a transcriptional repressor or as a transcriptional activator, depending on the cell context. Acts as a repressor of the Hedgehog signaling pathway. Represses the Hedgehog-dependent expression of Wnt4. Necessary to maintain the differentiated epithelial phenotype in renal cells through the inhibition of SNAI1, which itself induces the epithelial-to-mesenchymal transition. Represses transcriptional activation by CTNNB1 in the Wnt signaling pathway. May act by recruiting the corepressors CTBP1 and HDAC3. May be involved in neuron differentiation. The sequence is that of Zinc finger protein GLIS2 (Glis2) from Mus musculus (Mouse).